Reading from the N-terminus, the 324-residue chain is Malate dehydrogenase (324 aa).

NAD(+) is bound by residues 7 to 13 and aspartate 34; that span reads GAAGGIG. 2 residues coordinate substrate: arginine 88 and arginine 94. Residues asparagine 101 and 124 to 126 contribute to the NAD(+) site; that span reads VTN. The substrate site is built by asparagine 126 and arginine 160. Histidine 184 acts as the Proton acceptor in catalysis. Methionine 238 is an NAD(+) binding site.

This sequence belongs to the LDH/MDH superfamily. MDH type 1 family. Homodimer.

It carries out the reaction (S)-malate + NAD(+) = oxaloacetate + NADH + H(+). Functionally, catalyzes the reversible oxidation of malate to oxaloacetate. The chain is Malate dehydrogenase from Haemophilus ducreyi (strain 35000HP / ATCC 700724).